Reading from the N-terminus, the 304-residue chain is Recombination-associated protein RdgC (304 aa).

The protein belongs to the RdgC family.

The protein localises to the cytoplasm. It is found in the nucleoid. Functionally, may be involved in recombination. The polypeptide is Recombination-associated protein RdgC (Shewanella oneidensis (strain ATCC 700550 / JCM 31522 / CIP 106686 / LMG 19005 / NCIMB 14063 / MR-1)).